We begin with the raw amino-acid sequence, 248 residues long: Putative homeobox-leucine zipper protein HOX26 (248 aa).

Positions 50–118 are disordered; the sequence is KKVAAAAVVA…GDEEGASRKK (69 aa). Residues 79–89 show a composition bias toward basic residues; that stretch reads RQRRSCKKGRR. The homeobox DNA-binding region spans 114–173; it reads ASRKKLRLTGEQATLLEDSFRAHNILSHAEKQELAGKLGLSARQVEVWFQNRRARTKLKQ. Residues 172 to 216 are leucine-zipper; sequence KQTEADCDLLRRWCDHLAADNARLRRDLAELRRSSSSPPVSGLAV.

It belongs to the HD-ZIP homeobox family. Class II subfamily.

Its subcellular location is the nucleus. In terms of biological role, probable transcription factor. This chain is Putative homeobox-leucine zipper protein HOX26 (HOX26), found in Oryza sativa subsp. japonica (Rice).